The sequence spans 201 residues: Aminoglycoside N(6')-acetyltransferase type 1 (201 aa).

The region spanning 25–192 is the N-acetyltransferase domain; the sequence is VTLRLMTEHD…PAVYMVQTRQ (168 aa). Substrate is bound by residues tryptophan 51 and aspartate 154. Asparagine 159 lines the acetyl-CoA pocket.

In terms of assembly, homodimer.

It carries out the reaction kanamycin B + acetyl-CoA = N(6')-acetylkanamycin B + CoA + H(+). Functionally, catalyzes the transfer of an acetyl group from acetyl-CoA to the 6'-amino group of aminoglycoside molecules conferring resistance to antibiotics containing the purpurosamine ring including amikacin. The polypeptide is Aminoglycoside N(6')-acetyltransferase type 1 (aacA4) (Klebsiella pneumoniae).